The sequence spans 257 residues: Hydroxyacylglutathione hydrolase (257 aa).

Residues His54, His56, Asp58, His59, His109, Asp129, and His167 each coordinate Zn(2+).

It belongs to the metallo-beta-lactamase superfamily. Glyoxalase II family. As to quaternary structure, monomer. Zn(2+) serves as cofactor.

The enzyme catalyses an S-(2-hydroxyacyl)glutathione + H2O = a 2-hydroxy carboxylate + glutathione + H(+). It functions in the pathway secondary metabolite metabolism; methylglyoxal degradation; (R)-lactate from methylglyoxal: step 2/2. In terms of biological role, thiolesterase that catalyzes the hydrolysis of S-D-lactoyl-glutathione to form glutathione and D-lactic acid. The protein is Hydroxyacylglutathione hydrolase of Marinomonas sp. (strain MWYL1).